Consider the following 322-residue polypeptide: MVPSLALVPGEPAGIGPELCIRLAQQPRSDAHLIVYADPDTLHSAAKALCLSVRLLDPDQPARLPGDLPLHPIRQAAPTRFGTPDPANAAAVIAGLLGAAGDCLSGKLQGIVTGPVHKAVINAGGIAYTGTTELLAAQAGCPVVMMLANSIVRVALVTTHLPLRAVPEAITAEALARCLRITATAMQRDFGLEHPRIAVLGLNPHAGEDGLLGREELDVIIPVLDQLRSEGMQLIGPLPADTAFLPQKLTDFDAVVAMYHDQGLPVLKYSGFEQAVNITLGLPYPRVAVDHGTALELAGRGVADPSSLLAATALCARLAARS.

Threonine 132 contacts substrate. Histidine 160, histidine 205, and histidine 260 together coordinate a divalent metal cation. Residues lysine 268, asparagine 277, and arginine 286 each coordinate substrate.

Belongs to the PdxA family. As to quaternary structure, homodimer. Zn(2+) serves as cofactor. Requires Mg(2+) as cofactor. It depends on Co(2+) as a cofactor.

The protein localises to the cytoplasm. It catalyses the reaction 4-(phosphooxy)-L-threonine + NAD(+) = 3-amino-2-oxopropyl phosphate + CO2 + NADH. The protein operates within cofactor biosynthesis; pyridoxine 5'-phosphate biosynthesis; pyridoxine 5'-phosphate from D-erythrose 4-phosphate: step 4/5. Functionally, catalyzes the NAD(P)-dependent oxidation of 4-(phosphooxy)-L-threonine (HTP) into 2-amino-3-oxo-4-(phosphooxy)butyric acid which spontaneously decarboxylates to form 3-amino-2-oxopropyl phosphate (AHAP). The protein is 4-hydroxythreonine-4-phosphate dehydrogenase of Xanthomonas campestris pv. campestris (strain B100).